The following is a 756-amino-acid chain: Membrane-anchored protein 1 (756 aa).

The signal sequence occupies residues Met1–Gly24. N-linked (GlcNAc...) asparagine glycans are attached at residues Asn52 and Asn64. 3 helical membrane passes run Ile91 to Val111, Ile120 to Leu140, and Gln148 to Leu168. An N-linked (GlcNAc...) asparagine glycan is attached at Asn190. Positions Tyr281 to Arg328 are disordered. Residues Ser289–Ser300 show a composition bias toward low complexity. Asn396 and Asn407 each carry an N-linked (GlcNAc...) asparagine glycan. The segment at Glu427–Lys453 is disordered. Over residues Met433–Pro447 the composition is skewed to polar residues. Ser438 is modified (phosphoserine). N-linked (GlcNAc...) asparagine glycosylation is found at Asn459, Asn470, Asn471, Asn496, Asn497, Asn521, Asn522, Asn547, Asn548, Asn573, Asn574, Asn594, Asn598, Asn599, Asn618, Asn623, Asn649, Asn664, Asn676, and Asn685. Residues Met482–Asn650 form a disordered region. The segment covering Asn485–Arg520 has biased composition (low complexity). Polar residues-rich tracts occupy residues Arg593–Asn605, Arg617–Phe629, and Gly640–Asn650. Residues Gly686–Thr697 are compositionally biased toward polar residues. Positions Gly686–Pro713 are disordered. Asn715 carries an N-linked (GlcNAc...) asparagine glycan. The tract at residues Phe735–Arg756 is disordered.

To yeast YOL019W and YMR063W.

It localises to the cell membrane. The protein resides in the cell tip. Its function is as follows. Required for correct cell separation at high temperatures. The sequence is that of Membrane-anchored protein 1 (mac1) from Schizosaccharomyces pombe (strain 972 / ATCC 24843) (Fission yeast).